A 220-amino-acid polypeptide reads, in one-letter code: Small ribosomal subunit protein uS3c (220 aa).

Residues 48-119 (VQKHTNNPFH…KLCLILIKID (72 aa)) form the KH type-2 domain.

Belongs to the universal ribosomal protein uS3 family. In terms of assembly, part of the 30S ribosomal subunit.

It is found in the plastid. Its subcellular location is the chloroplast. In Psilotum nudum (Whisk fern), this protein is Small ribosomal subunit protein uS3c (rps3).